A 321-amino-acid polypeptide reads, in one-letter code: Protein APA1 (321 aa).

Residues 50–70 (SLIEKPERGQTPEGEDPLGKP) form a disordered region. Lys54 contacts substrate. The residue at position 60 (Thr60) is a Phosphothreonine. Substrate is bound by residues 93–94 (NK), Asn145, and 151–154 (GSSL). Residue His158 is the Nucleophile of the active site. Substrate is bound by residues Gln160, 273–275 (NST), Met280, and Lys284.

It belongs to the ATP adenylyltransferase family. Monomer. The cofactor is a divalent metal cation. Post-translationally, the N-terminus is blocked.

Its subcellular location is the cytoplasm. It localises to the nucleus. It catalyses the reaction ADP + ATP + H(+) = P(1),P(4)-bis(5'-adenosyl) tetraphosphate + phosphate. The enzyme catalyses sulfate + ADP + H(+) = adenosine 5'-phosphosulfate + phosphate. Functionally, ap4A phosphorylase catalyzes the phosphorolytic degradation of bis(5'-adenosyl) tetraphosphate (Ap4A) into ADP and ATP. Can also use other Np4N' nucleotides (where N and N' stand for A,C,G or U) as substrates with equal efficiency. Cannot catalyze the reverse reaction. Additionally, this enzyme can also catalyze the phosphorolytic degradation of adenosine 5'-phosphosulfate (AMPS) into ADP and sulfate, the reversible exchange reaction between inorganic phosphate and the beta-phosphate of a nucleoside diphosphate (NDP), and the synthesis of Ap4A from AMPS plus ATP. This Saccharomyces cerevisiae (strain ATCC 204508 / S288c) (Baker's yeast) protein is Protein APA1.